The chain runs to 144 residues: Urease subunit beta (144 aa).

Positions 110 to 119 (HAAPAAPAIP) are enriched in low complexity. The tract at residues 110–144 (HAAPAAPAIPARHESAAGDAPSPLKERAGFDNETR) is disordered. Positions 133-144 (LKERAGFDNETR) are enriched in basic and acidic residues.

It belongs to the urease beta subunit family. As to quaternary structure, heterotrimer of UreA (gamma), UreB (beta) and UreC (alpha) subunits. Three heterotrimers associate to form the active enzyme.

The protein localises to the cytoplasm. The catalysed reaction is urea + 2 H2O + H(+) = hydrogencarbonate + 2 NH4(+). It functions in the pathway nitrogen metabolism; urea degradation; CO(2) and NH(3) from urea (urease route): step 1/1. The polypeptide is Urease subunit beta (Micrococcus luteus (strain ATCC 4698 / DSM 20030 / JCM 1464 / CCM 169 / CCUG 5858 / IAM 1056 / NBRC 3333 / NCIMB 9278 / NCTC 2665 / VKM Ac-2230) (Micrococcus lysodeikticus)).